Here is a 141-residue protein sequence, read N- to C-terminus: Oleosin 14.9 kDa (141 aa).

Residues 1-22 (MADQTRTHHEMISRDSTQEAHP) show a composition bias toward basic and acidic residues. Residues 1 to 24 (MADQTRTHHEMISRDSTQEAHPKA) form a disordered region. The segment at 1-29 (MADQTRTHHEMISRDSTQEAHPKARQMVK) is polar. The hydrophobic stretch occupies residues 30–141 (AATAVTAGGS…NIGVQHQQVS (112 aa)). The next 3 membrane-spanning stretches (helical) occupy residues 38–58 (GSLL…LTVA), 60–80 (PLLV…ALII), and 81–101 (TGFL…SWLY).

The protein belongs to the oleosin family.

It localises to the lipid droplet. Its subcellular location is the membrane. Functionally, may have a structural role to stabilize the lipid body during desiccation of the seed by preventing coalescence of the oil. Probably interacts with both lipid and phospholipid moieties of lipid bodies. May also provide recognition signals for specific lipase anchorage in lipolysis during seedling growth. This Arabidopsis thaliana (Mouse-ear cress) protein is Oleosin 14.9 kDa (OL3).